The primary structure comprises 381 residues: D-rhamnosyltransferase WbpZ (381 aa).

Substrate-binding residues include Glu-19, His-116, Lys-206, and Val-252.

Belongs to the glycosyltransferase group 1 family. Glycosyltransferase 4 subfamily.

Its subcellular location is the cytoplasm. It catalyses the reaction GDP-alpha-D-rhamnose + N-acetyl-alpha-D-glucosaminyl-di-trans,octa-cis-undecaprenyl diphosphate = alpha-D-rhamnosyl-(1-&gt;3)-N-acetyl-alpha-D-glucosaminyl-1-diphospho-di-trans,octa-cis-undecaprenol + GDP + H(+). It carries out the reaction GDP-alpha-D-rhamnose + N-acetyl-alpha-D-galactosaminyl-di-trans,octa-cis-undecaprenyl diphosphate = alpha-D-rhamnosyl-(1-&gt;3)-N-acetyl-alpha-D-galactosaminyl-1-diphospho-di-trans,octa-cis-undecaprenol + GDP + H(+). The catalysed reaction is N-acetyl-alpha-D-glucosaminyl-di-trans,octa-cis-undecaprenyl diphosphate + GDP-alpha-D-mannose = alpha-D-mannosyl-(1-&gt;3)-N-acetyl-alpha-D-glucosaminyl-di-trans,octa-cis-undecaprenyl diphosphate + GDP + H(+). The enzyme catalyses N-acetyl-alpha-D-galactosaminyl-di-trans,octa-cis-undecaprenyl diphosphate + GDP-alpha-D-mannose = alpha-D-mannosyl-(1-&gt;3)-N-acetyl-alpha-D-galctosaminyl-1-diphospho-di-trans,octa-cis-undecaprenol + GDP + H(+). It functions in the pathway lipopolysaccharide biosynthesis; LPS oligosaccharide biosynthesis. Not activated by dithiothreitol (DTT) using GlcNAc-alpha-PO(3)-PO(3)-phenylundecyl (GlcNAc-PP-PhU) as acceptor substrate. 0.25% Triton X-100 and 0.125% NP-40 increases the activity 2.5-fold and 2-fold, respectively. 0.125% octyl glucoside has little effect on activity. Slightly increased activity with Mg(2+) and Pb(2+), while no effect with Mn(2+), Co(2+), Ni(2+), Cu(2+), Zn(2+), Ca(2+) or EDTA. Not inhibited by N-butyryl-galactosamine-alpha-benzyl or N-butyryl-glucosamine-beta-benzyl. Bis-imidazolium salts having aliphatic spacer groups with 4 or 6 carbons have little effect on activity, but spacer groups of 18-22 aliphatic carbons inhibit activity, with the most potent inhibitor being bis-imidazolium salt having a 20-carbon chain spacer length. In terms of biological role, non-processive alpha-1,3-D-rhamnosyltransferase. Catalyzes the transfer of one D-rhamnose (D-Rha) residue from donor substrate GDP-D-Rha in alpha-1-3 linkage to both GlcNAc- and GalNAc-diphosphate-lipid acceptor substrates. Is also able to transfer D-mannose (D-Man) to these acceptors at a lower level. Nucleotide sugars GDP-D-Rha, GDP-Fuc, UDP-Gal, UDP-GalNAc, UDP-GlcNAc and CMP-sialic acid cannot act as donor substrates. Only compounds with a diphosphate as the aglycone group can act as acceptor substrates. No activity is detected with compounds containing a diphosphate mimic. Fluorescent undecyl-anthracenyl group-containing compounds, such as GlcNAc-PO(3)-PO(3)-AnthrU and GalNAc-PO(3)-PO(3)-AnthrU, are also good acceptor substrates. Involved in the biosynthesis of the common polysaccharide antigen (CPA), also called A band, which is one of the two major cell surface O-antigens of the P.aeruginosa lipopolysaccharide. Involved in susceptibility to antibiotic colistin. This chain is D-rhamnosyltransferase WbpZ, found in Pseudomonas aeruginosa (strain ATCC 15692 / DSM 22644 / CIP 104116 / JCM 14847 / LMG 12228 / 1C / PRS 101 / PAO1).